A 545-amino-acid polypeptide reads, in one-letter code: ATP synthase subunit alpha (545 aa).

Position 172-179 (172-179 (GDRKTGKT)) interacts with ATP.

The protein belongs to the ATPase alpha/beta chains family. F-type ATPases have 2 components, CF(1) - the catalytic core - and CF(0) - the membrane proton channel. CF(1) has five subunits: alpha(3), beta(3), gamma(1), delta(1), epsilon(1). CF(0) has three main subunits: a(1), b(2) and c(9-12). The alpha and beta chains form an alternating ring which encloses part of the gamma chain. CF(1) is attached to CF(0) by a central stalk formed by the gamma and epsilon chains, while a peripheral stalk is formed by the delta and b chains.

It localises to the cell membrane. It catalyses the reaction ATP + H2O + 4 H(+)(in) = ADP + phosphate + 5 H(+)(out). In terms of biological role, produces ATP from ADP in the presence of a proton gradient across the membrane. The alpha chain is a regulatory subunit. The polypeptide is ATP synthase subunit alpha (Nocardia farcinica (strain IFM 10152)).